A 333-amino-acid polypeptide reads, in one-letter code: 1,5-anhydro-D-fructose reductase (333 aa).

Residues 9–12 (ASTI), 33–34 (ST), Arg-38, 71–76 (TTNELH), 93–94 (EK), Asn-120, 162–163 (WR), and Tyr-283 contribute to the NADP(+) site.

In terms of assembly, monomer.

The catalysed reaction is 1,5-anhydro-D-mannitol + NADP(+) = 1,5-anhydro-D-fructose + NADPH + H(+). Catalyzes the NADPH-specific reduction of 1,5-anhydro-D-fructose to 1,5-anhydro-D-mannitol. Also shows some activity against structurally related compounds such as 3-keto-1,5-anhydro-D-fructose, D-glucosone and D-xylosone. The enzyme cannot use NADH as cosubstrate. In Ensifer adhaerens (Sinorhizobium morelense), this protein is 1,5-anhydro-D-fructose reductase (afr).